Consider the following 343-residue polypeptide: Anthranilate 1,2-dioxygenase electron transfer component (343 aa).

The 94-residue stretch at 3 to 96 folds into the 2Fe-2S ferredoxin-type domain; the sequence is HSVALNFADG…NAAFYFDHHS (94 aa). Cys-40, Cys-45, Cys-48, and Cys-80 together coordinate [2Fe-2S] cluster. Residues 98–338 form a ferredoxin-reductase region; sequence ICNAGETLKI…HIYSEKFLQS (241 aa). Positions 103–206 constitute an FAD-binding FR-type domain; the sequence is ETLKIATVVT…EAPLGSFYLR (104 aa).

Belongs to the bacterial ring-hydroxylating dioxygenase ferredoxin reductase family. As to quaternary structure, monomer. It is part of the anthranilate dioxygenase two component enzyme system. The other component is an oxygenase component consisting of 3 large (AntA) and 3 small (AntB) subunits. Requires FAD as cofactor. [2Fe-2S] cluster is required as a cofactor.

It carries out the reaction 2 reduced [2Fe-2S]-[ferredoxin] + NAD(+) + H(+) = 2 oxidized [2Fe-2S]-[ferredoxin] + NADH. It participates in aromatic compound metabolism; anthranilate degradation via hydroxylation; catechol from anthranilate: step 1/1. In terms of biological role, electron transfer component of anthranilate 1,2-dioxygenase system. In Acinetobacter baylyi (strain ATCC 33305 / BD413 / ADP1), this protein is Anthranilate 1,2-dioxygenase electron transfer component.